A 454-amino-acid chain; its full sequence is Septin-10 (454 aa).

Residues 63-329 (QGFCFNILCV…ELYRRCKLEE (267 aa)) enclose the Septin-type G domain. The tract at residues 73–80 (GETGIGKS) is G1 motif. Residues 73–80 (GETGIGKS), Gly128, 209–217 (KADTVSKTE), Gly263, and Arg278 each bind GTP. A G3 motif region spans residues 125–128 (NTVG). Positions 208 to 211 (AKAD) are G4 motif.

It belongs to the TRAFAC class TrmE-Era-EngA-EngB-Septin-like GTPase superfamily. Septin GTPase family. Septins polymerize into heterooligomeric protein complexes that form filaments, and can associate with cellular membranes, actin filaments and microtubules. GTPase activity is required for filament formation. Interacts with ADGB. Post-translationally, proteolytically cleaved in vitro in a calmodulin-dependent manner. As to expression, widely expressed. Abundantly expressed in heart and kidney, placenta, skeletal muscles, liver and lung, as well as various tumor cell lines.

It localises to the cytoplasm. The protein localises to the cytoskeleton. Its subcellular location is the cell projection. The protein resides in the cilium. It is found in the flagellum. Its function is as follows. Filament-forming cytoskeletal GTPase. May play a role in cytokinesis (Potential). The chain is Septin-10 from Homo sapiens (Human).